Consider the following 356-residue polypeptide: Torsin-like protein (356 aa).

Residues 1-18 (MKLDYVLLLLFHLCFVNT) form the signal peptide. 110-117 (GYTGSGKN) is an ATP binding site. Residues Asn-125 and Asn-250 are each glycosylated (N-linked (GlcNAc...) asparagine).

This sequence belongs to the ClpA/ClpB family. Torsin subfamily.

It is found in the endoplasmic reticulum lumen. Functionally, may serve as a molecular chaperone assisting in the proper folding of secreted and/or membrane proteins. This is Torsin-like protein (ooc-5) from Caenorhabditis elegans.